Here is a 100-residue protein sequence, read N- to C-terminus: Omega-hexatoxin-Asp2b (100 aa).

Positions 1–23 (MKFSKLSITLAVILTQAVFVLCG) are cleaved as a signal peptide. A propeptide spanning residues 24 to 55 (MKNEDFMEKGLESNELHDAIKKPVNSGKPDTE) is cleaved from the precursor. Intrachain disulfides connect Cys-60/Cys-73, Cys-66/Cys-79, and Cys-72/Cys-84.

It belongs to the neurotoxin 15 family. 02 (omega-actx) subfamily. Expressed by the venom gland.

Its subcellular location is the secreted. Its function is as follows. Potent inhibitor of insect, but not mammalian, voltage-gated calcium channels (Cav). The sequence is that of Omega-hexatoxin-Asp2b from Atrax sp. (strain Illawarra) (Funnel-web spider).